Here is a 930-residue protein sequence, read N- to C-terminus: Isoleucine--tRNA ligase (930 aa).

The short motif at 57–67 (PYANGNIHVGH) is the 'HIGH' region element. Glu554 lines the L-isoleucyl-5'-AMP pocket. Positions 595 to 599 (KMSKS) match the 'KMSKS' region motif. Lys598 contacts ATP.

It belongs to the class-I aminoacyl-tRNA synthetase family. IleS type 1 subfamily. Monomer.

It is found in the cytoplasm. The catalysed reaction is tRNA(Ile) + L-isoleucine + ATP = L-isoleucyl-tRNA(Ile) + AMP + diphosphate. Its function is as follows. Catalyzes the attachment of isoleucine to tRNA(Ile). As IleRS can inadvertently accommodate and process structurally similar amino acids such as valine, to avoid such errors it has two additional distinct tRNA(Ile)-dependent editing activities. One activity is designated as 'pretransfer' editing and involves the hydrolysis of activated Val-AMP. The other activity is designated 'posttransfer' editing and involves deacylation of mischarged Val-tRNA(Ile). The polypeptide is Isoleucine--tRNA ligase (Streptococcus agalactiae serotype Ia (strain ATCC 27591 / A909 / CDC SS700)).